The chain runs to 204 residues: Protein phosphatase 1 regulatory subunit 1B (204 aa).

Met-1 carries the post-translational modification N-acetylmethionine. The tract at residues 1-204 is disordered; it reads MDPKDRKKIQ…QRPSPSEPGT (204 aa). Position 34 is a phosphothreonine; by PKA (Thr-34). Residues 41-63 show a composition bias toward basic and acidic residues; that stretch reads LSEHSSPEEEASPHQRASGEGHH. Ser-45 and Ser-46 each carry phosphoserine. A Phosphothreonine; by CDK5 modification is found at Thr-75. Polar residues predominate over residues 89 to 100; it reads HLQSISNLNENQ. Residue Ser-102 is modified to Phosphoserine. The segment covering 109 to 118 has biased composition (basic and acidic residues); sequence GELRELGYPR. Acidic residues-rich tracts occupy residues 119-138 and 170-183; these read EEDE…EDSQ and DESE…DQVE. Ser-137 carries the post-translational modification Phosphoserine. Ser-198 carries the post-translational modification Phosphoserine.

The protein belongs to the protein phosphatase inhibitor 1 family. Post-translationally, dopamine- and cyclic AMP-regulated neuronal phosphoprotein. Phosphorylation of Thr-34 is required for activity.

It localises to the cytoplasm. In terms of biological role, inhibitor of protein-phosphatase 1. This chain is Protein phosphatase 1 regulatory subunit 1B (PPP1R1B), found in Homo sapiens (Human).